The primary structure comprises 65 residues: Large ribosomal subunit protein bL35 (65 aa).

Belongs to the bacterial ribosomal protein bL35 family.

In Desulforapulum autotrophicum (strain ATCC 43914 / DSM 3382 / VKM B-1955 / HRM2) (Desulfobacterium autotrophicum), this protein is Large ribosomal subunit protein bL35.